The following is a 494-amino-acid chain: 3-octaprenyl-4-hydroxybenzoate carboxy-lyase (494 aa).

Asn172 is a Mn(2+) binding site. Prenylated FMN contacts are provided by residues 175–177 (IYR), 189–191 (RWL), and 194–195 (RG). Mn(2+) is bound at residue Glu238. The active-site Proton donor is the Asp287.

Belongs to the UbiD family. As to quaternary structure, homohexamer. Prenylated FMN is required as a cofactor. It depends on Mn(2+) as a cofactor.

It localises to the cell membrane. The catalysed reaction is a 4-hydroxy-3-(all-trans-polyprenyl)benzoate + H(+) = a 2-(all-trans-polyprenyl)phenol + CO2. It functions in the pathway cofactor biosynthesis; ubiquinone biosynthesis. Functionally, catalyzes the decarboxylation of 3-octaprenyl-4-hydroxy benzoate to 2-octaprenylphenol, an intermediate step in ubiquinone biosynthesis. This chain is 3-octaprenyl-4-hydroxybenzoate carboxy-lyase, found in Citrobacter koseri (strain ATCC BAA-895 / CDC 4225-83 / SGSC4696).